A 243-amino-acid polypeptide reads, in one-letter code: MQQNHESLLFQLSSVEVGQHYYWNIGSFQVHAQVLITSWFVLGLLLGIALIATRKLETIPNTTQNFIEYVLEFIRDLTRTQIGEEEYRSWIPFVGTLFLFIFVSNWSGALIPWKVIELPNGELAAPTNDINTTVALALLTSVAYFYAGLNKKGLSYFGKYIQPTPVLLPINILEDFTKPLSLSFRLFGNILADELVVAVLVSLVPLVIPVPMMFLGLFTSGIQALIFATLAGAYIGESLEGHH.

The next 5 helical transmembrane spans lie at 32-52 (AQVL…ALIA), 91-111 (IPFV…GALI), 130-150 (INTT…AGLN), 195-215 (LVVA…MMFL), and 216-236 (GLFT…AYIG).

Belongs to the ATPase A chain family. As to quaternary structure, F-type ATPases have 2 components, CF(1) - the catalytic core - and CF(0) - the membrane proton channel. CF(1) has five subunits: alpha(3), beta(3), gamma(1), delta(1), epsilon(1). CF(0) has four main subunits: a, b, b' and c.

Its subcellular location is the plastid. It localises to the chloroplast thylakoid membrane. Key component of the proton channel; it plays a direct role in the translocation of protons across the membrane. This Chaetosphaeridium globosum (Charophycean green alga) protein is ATP synthase subunit a, chloroplastic.